Reading from the N-terminus, the 383-residue chain is S-adenosylmethionine synthase 1 (383 aa).

His15 is a binding site for ATP. Asp17 is a binding site for Mg(2+). Residue Glu43 coordinates K(+). Residues Glu56 and Gln99 each contribute to the L-methionine site. The flexible loop stretch occupies residues 99–109 (QSPDINLGVSR). ATP-binding positions include 162–164 (DGK), 228–229 (RF), Asp237, 243–244 (RK), Ala260, and Lys264. Position 237 (Asp237) interacts with L-methionine. An L-methionine-binding site is contributed by Lys268.

It belongs to the AdoMet synthase family. Homotetramer; dimer of dimers. Requires Mg(2+) as cofactor. The cofactor is K(+).

It is found in the cytoplasm. It carries out the reaction L-methionine + ATP + H2O = S-adenosyl-L-methionine + phosphate + diphosphate. It participates in amino-acid biosynthesis; S-adenosyl-L-methionine biosynthesis; S-adenosyl-L-methionine from L-methionine: step 1/1. Its function is as follows. Catalyzes the formation of S-adenosylmethionine (AdoMet) from methionine and ATP. The overall synthetic reaction is composed of two sequential steps, AdoMet formation and the subsequent tripolyphosphate hydrolysis which occurs prior to release of AdoMet from the enzyme. The chain is S-adenosylmethionine synthase 1 from Rhodopseudomonas palustris (strain BisB18).